A 376-amino-acid chain; its full sequence is Alanine racemase 1 (376 aa).

K40 serves as the catalytic Proton acceptor; specific for D-alanine. The residue at position 40 (K40) is an N6-(pyridoxal phosphate)lysine. R138 contributes to the substrate binding site. Catalysis depends on Y268, which acts as the Proton acceptor; specific for L-alanine. M316 is a binding site for substrate.

This sequence belongs to the alanine racemase family. Requires pyridoxal 5'-phosphate as cofactor.

The enzyme catalyses L-alanine = D-alanine. It participates in amino-acid biosynthesis; D-alanine biosynthesis; D-alanine from L-alanine: step 1/1. In terms of biological role, catalyzes the interconversion of L-alanine and D-alanine. May also act on other amino acids. The polypeptide is Alanine racemase 1 (alr1) (Oceanobacillus iheyensis (strain DSM 14371 / CIP 107618 / JCM 11309 / KCTC 3954 / HTE831)).